Consider the following 244-residue polypeptide: Phosphoadenosine 5'-phosphosulfate reductase (244 aa).

The active-site Nucleophile; cysteine thiosulfonate intermediate is the cysteine 239.

This sequence belongs to the PAPS reductase family. CysH subfamily.

The protein resides in the cytoplasm. It catalyses the reaction [thioredoxin]-disulfide + sulfite + adenosine 3',5'-bisphosphate + 2 H(+) = [thioredoxin]-dithiol + 3'-phosphoadenylyl sulfate. It functions in the pathway sulfur metabolism; hydrogen sulfide biosynthesis; sulfite from sulfate: step 3/3. Functionally, catalyzes the formation of sulfite from phosphoadenosine 5'-phosphosulfate (PAPS) using thioredoxin as an electron donor. The chain is Phosphoadenosine 5'-phosphosulfate reductase from Pectobacterium carotovorum subsp. carotovorum (strain PC1).